A 203-amino-acid polypeptide reads, in one-letter code: LexA repressor (203 aa).

A DNA-binding region (H-T-H motif) is located at residues 28 to 47 (IREIGDEFGITAKGAYDHLK). Active-site for autocatalytic cleavage activity residues include serine 127 and lysine 164.

This sequence belongs to the peptidase S24 family. Homodimer.

It catalyses the reaction Hydrolysis of Ala-|-Gly bond in repressor LexA.. Its function is as follows. Represses a number of genes involved in the response to DNA damage (SOS response), including recA and lexA. In the presence of single-stranded DNA, RecA interacts with LexA causing an autocatalytic cleavage which disrupts the DNA-binding part of LexA, leading to derepression of the SOS regulon and eventually DNA repair. This chain is LexA repressor, found in Leptospira interrogans serogroup Icterohaemorrhagiae serovar copenhageni (strain Fiocruz L1-130).